The chain runs to 199 residues: Probable NADH dehydrogenase [ubiquinone] iron-sulfur protein 7, mitochondrial (199 aa).

Positions 74, 75, 139, and 169 each coordinate [4Fe-4S] cluster.

The protein belongs to the complex I 20 kDa subunit family. As to quaternary structure, complex I is composed of 45 different subunits This is a component of the iron-sulfur (IP) fragment of the enzyme. The cofactor is [4Fe-4S] cluster.

It localises to the mitochondrion. It carries out the reaction a ubiquinone + NADH + 5 H(+)(in) = a ubiquinol + NAD(+) + 4 H(+)(out). Its function is as follows. Core subunit of the mitochondrial membrane respiratory chain NADH dehydrogenase (Complex I) that is believed to belong to the minimal assembly required for catalysis. Complex I functions in the transfer of electrons from NADH to the respiratory chain. The immediate electron acceptor for the enzyme is believed to be ubiquinone. This is Probable NADH dehydrogenase [ubiquinone] iron-sulfur protein 7, mitochondrial (nduf-7) from Caenorhabditis elegans.